The following is a 100-amino-acid chain: Class II hydrophobin FOXG_02746 (100 aa).

The N-terminal stretch at 1-17 (MQFYTIVSLFLAGTAYA) is a signal peptide. 4 disulfides stabilise this stretch: Cys29-Cys79, Cys40-Cys70, Cys41-Cys53, and Cys80-Cys92.

Belongs to the cerato-ulmin hydrophobin family. As to quaternary structure, homodimer. Homodimers further self-assemble to form highly ordered films at water-air interfaces through intermolecular interactions.

The protein localises to the secreted. It is found in the cell wall. Aerial growth, conidiation, and dispersal of filamentous fungi in the environment rely upon a capability of their secreting small amphipathic proteins called hydrophobins (HPBs) with low sequence identity. Class I can self-assemble into an outermost layer of rodlet bundles on aerial cell surfaces, conferring cellular hydrophobicity that supports fungal growth, development and dispersal; whereas Class II form highly ordered films at water-air interfaces through intermolecular interactions but contribute nothing to the rodlet structure. FOXG_02746 is a class II hydrophobin that is likely required for plant colonization. This Fusarium oxysporum f. sp. lycopersici (strain 4287 / CBS 123668 / FGSC 9935 / NRRL 34936) (Fusarium vascular wilt of tomato) protein is Class II hydrophobin FOXG_02746.